We begin with the raw amino-acid sequence, 166 residues long: Large ribosomal subunit protein uL10 (166 aa).

The protein belongs to the universal ribosomal protein uL10 family. Part of the ribosomal stalk of the 50S ribosomal subunit. The N-terminus interacts with L11 and the large rRNA to form the base of the stalk. The C-terminus forms an elongated spine to which L12 dimers bind in a sequential fashion forming a multimeric L10(L12)X complex.

Forms part of the ribosomal stalk, playing a central role in the interaction of the ribosome with GTP-bound translation factors. This is Large ribosomal subunit protein uL10 from Limosilactobacillus reuteri (strain DSM 20016) (Lactobacillus reuteri).